The primary structure comprises 973 residues: Peptidyl-glycine alpha-amidating monooxygenase (973 aa).

Positions 1 to 20 (MAGRVPSLLVLLVFPSSCLA) are cleaved as a signal peptide. Positions 1–494 (MAGRVPSLLV…EGTWEPEHTG (494 aa)) are peptidylglycine alpha-hydroxylating monooxygenase. The propeptide occupies 21–30 (FRSPLSVFKR). The Intragranular portion of the chain corresponds to 31-863 (FKETTRPFSN…QKLIKEPGSG (833 aa)). 5 cysteine pairs are disulfide-bonded: Cys42-Cys181, Cys76-Cys121, Cys109-Cys126, Cys222-Cys329, and Cys288-Cys310. Residues His102 and His103 each coordinate Cu(2+). Cu(2+) is bound by residues His167, His237, His239, and Met309. The interval 495–817 (DFHMEEALDW…LTEKLEHRSV (323 aa)) is peptidyl-alpha-hydroxyglycine alpha-amidating lyase. NHL repeat units follow at residues 498–541 (MEEA…NSFD), 567–608 (AAVL…LDPN), 617–662 (LGRS…FSPS), and 670–714 (GEES…FKTD). Residue Val517 coordinates Ca(2+). Arg530 provides a ligand contact to a protein. His582 lines the Zn(2+) pocket. A Ca(2+)-binding site is contributed by Leu584. The cysteines at positions 631 and 652 are disulfide-linked. An a protein-binding site is contributed by Tyr651. His687 contacts Zn(2+). Residues Cys699 and Cys710 are joined by a disulfide bond. Position 703 (Arg703) interacts with a protein. Asn762 carries an N-linked (GlcNAc...) asparagine glycan. Residues 766–809 (GEIIDIFKPVRKHFDMPHDIVASEDGTVYIGDAHTNTVWKFTLT) form an NHL 5 repeat. His783 lines the Zn(2+) pocket. A Ca(2+)-binding site is contributed by Asp784. A helical transmembrane segment spans residues 864–887 (VPVVLITTLLVIPVVVLLAIAIFI). A sulfotyrosine mark is found at Ile875 and Arg893. Residues 888–973 (RWKKSRAFGD…PLPALAPSSS (86 aa)) are Cytoplasmic-facing. Phosphoserine occurs at positions 918, 929, and 942. The interval 925–942 (NFFASRKGYSRKGFDRLS) is interaction with RASSF9. Positions 937–973 (GFDRLSTEGSDQEKEDDGSESEEEYSAPLPALAPSSS) are disordered. Residue Thr943 is modified to Phosphothreonine. Ser946 carries the post-translational modification Phosphoserine; by UHMK1; in vitro. Over residues 949–961 (EKEDDGSESEEEY) the composition is skewed to acidic residues. A Phosphoserine modification is found at Ser957. Low complexity predominate over residues 962–973 (SAPLPALAPSSS).

In the C-terminal section; belongs to the peptidyl-alpha-hydroxyglycine alpha-amidating lyase family. The protein in the N-terminal section; belongs to the copper type II ascorbate-dependent monooxygenase family. In terms of assembly, monomer. Interacts with RASSF9. Zn(2+) serves as cofactor. Requires Cu(2+) as cofactor.

It is found in the cytoplasmic vesicle. The protein resides in the secretory vesicle membrane. The protein localises to the membrane. Its subcellular location is the secreted. The catalysed reaction is a [peptide]-C-terminal glycine + 2 L-ascorbate + O2 = a [peptide]-C-terminal (2S)-2-hydroxyglycine + 2 monodehydro-L-ascorbate radical + H2O. It catalyses the reaction a [peptide]-C-terminal (2S)-2-hydroxyglycine = a [peptide]-C-terminal amide + glyoxylate. It carries out the reaction N-dodecanoylglycine + 2 L-ascorbate + O2 = N-dodecanoyl-(2S)-hydroxyglycine + 2 monodehydro-L-ascorbate radical + H2O. The enzyme catalyses N-dodecanoyl-(2S)-hydroxyglycine = dodecanamide + glyoxylate. The catalysed reaction is N-(9Z,12Z,15Z)-octadecatrienoylglycine + 2 L-ascorbate + O2 = N-(9Z,12Z,15Z)-octadecatrienoyl-(2S)-hydroxyglycine + 2 monodehydro-L-ascorbate radical + H2O. It catalyses the reaction N-(9Z,12Z,15Z)-octadecatrienoyl-(2S)-hydroxyglycine = (9Z,12Z,15Z)-octadecatrienamide + glyoxylate. It carries out the reaction N-(9Z-octadecenoyl)glycine + 2 L-ascorbate + O2 = N-(9Z-octadecenoyl)-(2S)-hydroxyglycine + 2 monodehydro-L-ascorbate radical + H2O. The enzyme catalyses N-(9Z-octadecenoyl)-(2S)-hydroxyglycine = (9Z)-octadecenamide + glyoxylate. The catalysed reaction is N-tetradecanoylglycine + 2 L-ascorbate + O2 = N-tetradecanoyl-(2S)-hydroxyglycine + 2 monodehydro-L-ascorbate radical + H2O. It catalyses the reaction N-tetradecanoyl-(2S)-hydroxyglycine = tetradecamide + glyoxylate. It carries out the reaction N-decanoylglycine + 2 L-ascorbate + O2 = N-decanoyl-(2S)-hydroxyglycine + 2 monodehydro-L-ascorbate radical + H2O. The enzyme catalyses N-decanoyl-(2S)-hydroxyglycine = decanamide + glyoxylate. The catalysed reaction is N-octanoylglycine + 2 L-ascorbate + O2 = N-octanoyl-(2S)-hydroxyglycine + 2 monodehydro-L-ascorbate radical + H2O. It catalyses the reaction N-octanoyl-(2S)-hydroxyglycine = octanamide + glyoxylate. With respect to regulation, PAM activity is inhibited by EDTA, phenylglyoxal and diethyl pyrocarbonate. PAL activity is stimulated by cadmium and inhibited by mercury. Functionally, bifunctional enzyme that catalyzes amidation of the C-terminus of proteins. Alpha-amidation is present at the C-terminus of many endocrine hormones and neuropeptides and is required for their activity. C-terminal amidation also takes place in response to protein fragmentation triggered by oxidative stress, promoting degradation of amidated protein fragments by the proteasome. Alpha-amidation involves two sequential reactions, both of which are catalyzed by separate catalytic domains of the enzyme. The first step, catalyzed by peptidyl alpha-hydroxylating monooxygenase (PHM) domain, is the copper-, ascorbate-, and O2- dependent stereospecific hydroxylation (with S stereochemistry) at the alpha-carbon (C-alpha) of the C-terminal glycine of the peptidylglycine substrate. The second step, catalyzed by the peptidylglycine amidoglycolate lyase (PAL) domain, is the zinc-dependent cleavage of the N-C-alpha bond, producing the alpha-amidated peptide and glyoxylate. Similarly, catalyzes the two-step conversion of an N-fatty acylglycine to a primary fatty acid amide and glyoxylate. The chain is Peptidyl-glycine alpha-amidating monooxygenase from Homo sapiens (Human).